Here is a 320-residue protein sequence, read N- to C-terminus: Methionyl-tRNA formyltransferase (320 aa).

112–115 (SILP) is a binding site for (6S)-5,6,7,8-tetrahydrofolate.

It belongs to the Fmt family.

The catalysed reaction is L-methionyl-tRNA(fMet) + (6R)-10-formyltetrahydrofolate = N-formyl-L-methionyl-tRNA(fMet) + (6S)-5,6,7,8-tetrahydrofolate + H(+). Attaches a formyl group to the free amino group of methionyl-tRNA(fMet). The formyl group appears to play a dual role in the initiator identity of N-formylmethionyl-tRNA by promoting its recognition by IF2 and preventing the misappropriation of this tRNA by the elongation apparatus. This chain is Methionyl-tRNA formyltransferase, found in Shewanella woodyi (strain ATCC 51908 / MS32).